Consider the following 449-residue polypeptide: UDP-N-acetylmuramoylalanine--D-glutamate ligase (449 aa).

118-124 (GTNGKTT) contributes to the ATP binding site.

The protein belongs to the MurCDEF family.

It localises to the cytoplasm. The enzyme catalyses UDP-N-acetyl-alpha-D-muramoyl-L-alanine + D-glutamate + ATP = UDP-N-acetyl-alpha-D-muramoyl-L-alanyl-D-glutamate + ADP + phosphate + H(+). It participates in cell wall biogenesis; peptidoglycan biosynthesis. In terms of biological role, cell wall formation. Catalyzes the addition of glutamate to the nucleotide precursor UDP-N-acetylmuramoyl-L-alanine (UMA). This is UDP-N-acetylmuramoylalanine--D-glutamate ligase from Staphylococcus epidermidis (strain ATCC 12228 / FDA PCI 1200).